A 320-amino-acid polypeptide reads, in one-letter code: Large ribosomal subunit protein uL10y (320 aa).

The tract at residues 289–320 (AGGGAPAAAKVEEKEESDEEDYGGDFGLFDEE) is disordered. The span at 302 to 320 (KEESDEEDYGGDFGLFDEE) shows a compositional bias: acidic residues. Serine 305 is subject to Phosphoserine. The residue at position 310 (tyrosine 310) is a Phosphotyrosine.

This sequence belongs to the universal ribosomal protein uL10 family. As to quaternary structure, P0 forms a pentameric complex by interaction with dimers of P1 and P2.

In terms of biological role, ribosomal protein P0 is the functional equivalent of E.coli protein L10. This Arabidopsis thaliana (Mouse-ear cress) protein is Large ribosomal subunit protein uL10y (RPP0B).